We begin with the raw amino-acid sequence, 284 residues long: RNase adapter protein RapZ (284 aa).

Position 8-15 (8-15 (GRSGSGKS)) interacts with ATP. Position 56-59 (56-59 (DVRN)) interacts with GTP. Residues 266–284 (RSRGKNAQSRHRTLEKSKS) form an RNA-binding region.

Belongs to the RapZ-like family. RapZ subfamily. Homotrimer.

Functionally, modulates the synthesis of GlmS, by affecting the processing and stability of the regulatory small RNA GlmZ. When glucosamine-6-phosphate (GlcN6P) concentrations are high in the cell, RapZ binds GlmZ and targets it to cleavage by RNase E. Consequently, GlmZ is inactivated and unable to activate GlmS synthesis. Under low GlcN6P concentrations, RapZ is sequestered and inactivated by an other regulatory small RNA, GlmY, preventing GlmZ degradation and leading to synthesis of GlmS. In Sodalis glossinidius (strain morsitans), this protein is RNase adapter protein RapZ.